The chain runs to 57 residues: UPF0509 protein YciZ (57 aa).

The protein belongs to the UPF0509 family.

This chain is UPF0509 protein YciZ, found in Escherichia coli O127:H6 (strain E2348/69 / EPEC).